The primary structure comprises 215 residues: uncharacterized protein (215 aa).

Gly-53, Glu-74, and Asp-97 together coordinate S-adenosyl-L-methionine.

This sequence belongs to the methyltransferase superfamily. YrrT family.

Functionally, could be a S-adenosyl-L-methionine-dependent methyltransferase. This is an uncharacterized protein from Geobacillus kaustophilus (strain HTA426).